The primary structure comprises 194 residues: Recombination protein RecR (194 aa).

Residues 53–68 (CEICFNLDVTSPCSIC) form a C4-type zinc finger. In terms of domain architecture, Toprim spans 76–171 (SLLCIVEELG…KVTRLACGIP (96 aa)).

The protein belongs to the RecR family.

In terms of biological role, may play a role in DNA repair. It seems to be involved in an RecBC-independent recombinational process of DNA repair. It may act with RecF and RecO. This Anaplasma phagocytophilum (strain HZ) protein is Recombination protein RecR.